The following is a 450-amino-acid chain: Neuronal acetylcholine receptor subunit alpha-10 (450 aa).

An N-terminal signal peptide occupies residues 1-24 (MGLRSHHLSLGLLLLFLLPAECLG). Residues 25-237 (AEGRLALKLF…FTLLLRRRAA (213 aa)) are Extracellular-facing. 2 N-linked (GlcNAc...) asparagine glycosylation sites follow: Asn40 and Asn56. Cystine bridges form between Cys154–Cys168 and Cys218–Cys219. Helical transmembrane passes span 238–258 (AYVC…PLAF), 268–288 (VSLG…LAES), and 302–322 (YMAT…IMNL). At 323 to 428 (HYCGPSVRPV…WKRLARVMDR (106 aa)) the chain is on the cytoplasmic side. Positions 355-380 (EPCGQSRPPELSPSPQSPEGGAGPPA) are disordered. A helical transmembrane segment spans residues 429–449 (FFLAIFFSMALVMSLLVLVQA).

It belongs to the ligand-gated ion channel (TC 1.A.9) family. Acetylcholine receptor (TC 1.A.9.1) subfamily. Alpha-10/CHRNA10 sub-subfamily. Forms homo- or heterooligomeric channels in conjunction with CHRNA10. The native outer hair cell receptor may be composed of CHRNA9:CHRNA10 heterooligomers. Found in the stoichiometric form (CHRNA9)2:(CHRNA10)3. Expressed in inner-ear tissue, tonsil, immortalized B-cells, cultured T-cells and peripheral blood lymphocytes.

The protein resides in the synaptic cell membrane. It localises to the cell membrane. It carries out the reaction Ca(2+)(in) = Ca(2+)(out). It catalyses the reaction K(+)(in) = K(+)(out). The catalysed reaction is Na(+)(in) = Na(+)(out). The enzyme catalyses Mg(2+)(in) = Mg(2+)(out). Its activity is regulated as follows. Activated by a myriad of ligands such as acetylcholine. AChR activity is inhibited by the antagonists alpha-conotoxins RgIA and GeXXA, small disulfide-constrained peptides from cone snails. Component of neuronal acetylcholine receptors (nAChRs) that function as pentameric, ligand-gated cation channels with high calcium permeability. nAChRs are excitatory neurotrasnmitter receptors formed by a collection of nAChR subunits. Each nAchR subunit confers differential attributes to channel properties, including activation, deactivation and desensitization kinetics, pH sensitivity, cation permeability, and binding to allosteric modulators. Forms heteropentamers with CHRNA9. Expressed in the inner ear, in sympathetic neurons and in other non-neuronal cells, such as skin keratinocytes and lymphocytes. nAChR formed by CHRNA9:CHRNA10 is involved in modulation of auditory stimuli. The channel is permeable to a range of divalent cations including calcium, the influx of which may activate a potassium current which hyperpolarizes the cell membrane. In the ear, mediates synaptic transmission between efferent olivocochlear fibers and hair cells of the cochlea, this may lead to a reduction in basilar membrane motion, altering the activity of auditory nerve fibers and reducing the range of dynamic hearing. This may protect against acoustic trauma. May also regulate keratinocyte adhesion. The sequence is that of Neuronal acetylcholine receptor subunit alpha-10 from Homo sapiens (Human).